The following is a 379-amino-acid chain: Putative FBD-associated F-box protein At5g38570 (379 aa).

The F-box domain occupies 1-47 (MDNINGLPDDLLVKILSFVPTYVAVSTCVLSKRWEFLWMWLPNLEFV). An FBD domain is found at 295–345 (CWNQPSSVLECLLSSLKILNWSAYFGRPQDRDIAVYILKNACHLKTATFLT).

This is Putative FBD-associated F-box protein At5g38570 from Arabidopsis thaliana (Mouse-ear cress).